Reading from the N-terminus, the 130-residue chain is Calcitonin gene-related peptide 2 (130 aa).

The signal sequence occupies residues 1–26; the sequence is MDFWKFFPFLALSTIWVLCLASSLQA. The propeptide occupies 27-82; it reads APFRSALESSLDLGTLGDQEKHLLLAALMQDYEQMKARKLEQEEQETKGSRVTAQK. Cysteines 85 and 90 form a disulfide. Phe-120 is subject to Phenylalanine amide. A propeptide spanning residues 127-130 is cleaved from the precursor; sequence DLQA.

The protein belongs to the calcitonin family. In terms of tissue distribution, detected in nerve cells of cerebrum, hippocampus and pons/midbrain in newborns, and only in nerve cells of pons/midbrain in adult.

The protein resides in the secreted. Its function is as follows. CALCB/CGRP2 is a peptide hormone that induces vasodilation mediated by the CALCRL-RAMP1 receptor complex. Dilates a variety of vessels including the coronary, cerebral and systemic vasculature. Its abundance in the CNS also points toward a neurotransmitter or neuromodulator role. The chain is Calcitonin gene-related peptide 2 from Mus musculus (Mouse).